A 780-amino-acid polypeptide reads, in one-letter code: GATOR2 complex protein WDR24 (780 aa).

WD repeat units lie at residues 67–107, 113–153, 156–196, 200–240, 244–286, and 290–333; these read SLNF…RNKQ, EHKR…SVST, GQSE…RCER, AHNG…AKEI, QTIA…IPFA, and EHKD…IDRA. The C4-type zinc finger occupies 708–730; the sequence is NCSNCKRPMSNKGWICDRCRQCA. Positions 709, 712, 723, 726, 733, 736, 747, 750, 752, 755, 758, 769, 773, 775, and 777 each coordinate Zn(2+). Residues 731–780 form an RING-type; atypical zinc finger; that stretch reads SMCAVCHHVVKGLFVWCQGCCHGGHLQHIMNWMQNNCYCPAGCGHVCEYS.

Belongs to the WD repeat WDR24 family. Component of the GATOR2 subcomplex, composed of MIOS, SEC13, SEH1L, WDR24 and WDR59. The GATOR2 complex interacts with CASTOR1 and CASTOR2; the interaction is negatively regulated by arginine. The GATOR2 complex interacts with SESN1, SESN2 and SESN3; the interaction is negatively regulated by amino acids.

It localises to the lysosome membrane. It carries out the reaction S-ubiquitinyl-[E2 ubiquitin-conjugating enzyme]-L-cysteine + [acceptor protein]-L-lysine = [E2 ubiquitin-conjugating enzyme]-L-cysteine + N(6)-ubiquitinyl-[acceptor protein]-L-lysine.. The protein operates within protein modification; protein ubiquitination. The GATOR2 complex is negatively regulated by the upstream amino acid sensors CASTOR1 and SESN2, which sequester the GATOR2 complex in absence of amino acids. In the presence of abundant amino acids, GATOR2 is released from CASTOR1 and SESN2 and activated. Catalytic component of the GATOR2 complex, a multiprotein complex that acts as an activator of the amino acid-sensing branch of the mTORC1 signaling pathway. The GATOR2 complex indirectly activates mTORC1 through the inhibition of the GATOR1 subcomplex. GATOR2 probably acts as an E3 ubiquitin-protein ligase toward GATOR1. In the presence of abundant amino acids, the GATOR2 complex mediates ubiquitination of the NPRL2 core component of the GATOR1 complex, leading to GATOR1 inactivation. In the absence of amino acids, GATOR2 is inhibited, activating the GATOR1 complex. In addition to its role in regulation of the mTORC1 complex, promotes the acidification of lysosomes and facilitates autophagic flux. Within the GATOR2 complex, WDR24 constitutes the catalytic subunit that mediates 'Lys-6'-linked ubiquitination of NPRL2. The protein is GATOR2 complex protein WDR24 of Xenopus laevis (African clawed frog).